The chain runs to 152 residues: Cell division protein SepF (152 aa).

Belongs to the SepF family. As to quaternary structure, homodimer. Interacts with FtsZ.

It is found in the cytoplasm. Functionally, cell division protein that is part of the divisome complex and is recruited early to the Z-ring. Probably stimulates Z-ring formation, perhaps through the cross-linking of FtsZ protofilaments. Its function overlaps with FtsA. This chain is Cell division protein SepF, found in Listeria monocytogenes serotype 4b (strain CLIP80459).